The primary structure comprises 266 residues: Apolipoprotein A-I (266 aa).

An N-terminal signal peptide occupies residues 1 to 18 (MKAVVLTLAVLFLTGSQA). A run of 2 repeats spans residues 67–88 (LKLL…EQIG) and 89–110 (PVTQ…QEMS). A 10 X approximate tandem repeats region spans residues 67–266 (LKLLDNWDSL…DEAAKKLNAQ (200 aa)). Methionine 109 is modified (methionine sulfoxide). A 3; half-length repeat occupies 111–121 (KDLEEVKQKVQ). 5 consecutive repeat copies span residues 122–142 (PYLD…RQKV), 144–165 (PLGA…EKLS), 166–187 (PLGE…AQLA), 188–210 (PYSD…DGGA), and 211–231 (SLAE…EKAK). A 9; half-length repeat occupies 232–242 (PALEDLRQGLL). Copy 10 of the repeat occupies 243 to 266 (PVLESFKVSLLAAVDEAAKKLNAQ).

It belongs to the apolipoprotein A1/A4/E family. Homodimer. Interacts with APOA1BP and CLU. Component of a sperm activating protein complex (SPAP), consisting of APOA1, an immunoglobulin heavy chain, an immunoglobulin light chain and albumin. Interacts with NDRG1. Interacts with SCGB3A2. Interacts with NAXE and YJEFN3. In terms of processing, glycosylated. Post-translationally, palmitoylated. Phosphorylation sites are present in the extracellular medium. As to expression, major protein of plasma HDL, also found in chylomicrons.

The protein localises to the secreted. Functionally, participates in the reverse transport of cholesterol from tissues to the liver for excretion by promoting cholesterol efflux from tissues and by acting as a cofactor for the lecithin cholesterol acyltransferase (LCAT). As part of the SPAP complex, activates spermatozoa motility. The polypeptide is Apolipoprotein A-I (APOA1) (Ailuropoda melanoleuca (Giant panda)).